The sequence spans 103 residues: High-potential iron-sulfur protein (103 aa).

An N-terminal signal peptide occupies residues 1-28; it reads MSNRRLFLKSIPIMAAAGAVGMAGLARA. The [4Fe-4S] cluster site is built by cysteine 66, cysteine 69, cysteine 82, and cysteine 96.

The protein belongs to the high-potential iron-sulfur protein (HiPIP) family. In terms of assembly, homodimer.

It is found in the periplasm. In terms of biological role, specific class of high-redox-potential 4Fe-4S ferredoxins. Functions in anaerobic electron transport in most purple and in some other photosynthetic bacteria and in at least one genus (Paracoccus) of halophilic, denitrifying bacteria. This Ralstonia nicotianae (strain ATCC BAA-1114 / GMI1000) (Ralstonia solanacearum) protein is High-potential iron-sulfur protein (hip).